Reading from the N-terminus, the 281-residue chain is Pantothenate synthetase (281 aa).

30–37 contributes to the ATP binding site; the sequence is MGYLHEGH. His37 functions as the Proton donor in the catalytic mechanism. A (R)-pantoate-binding site is contributed by Gln61. Gln61 contacts beta-alanine. 147 to 150 provides a ligand contact to ATP; it reads GEKD. Residue Gln153 participates in (R)-pantoate binding. ATP contacts are provided by residues Ile176 and 184 to 187; that span reads KSSR.

The protein belongs to the pantothenate synthetase family. Homodimer.

The protein resides in the cytoplasm. The enzyme catalyses (R)-pantoate + beta-alanine + ATP = (R)-pantothenate + AMP + diphosphate + H(+). Its pathway is cofactor biosynthesis; (R)-pantothenate biosynthesis; (R)-pantothenate from (R)-pantoate and beta-alanine: step 1/1. Functionally, catalyzes the condensation of pantoate with beta-alanine in an ATP-dependent reaction via a pantoyl-adenylate intermediate. This is Pantothenate synthetase from Clostridium botulinum (strain Kyoto / Type A2).